Here is a 721-residue protein sequence, read N- to C-terminus: Phosphoribosylformylglycinamidine synthase subunit PurL (721 aa).

His-47 is a catalytic residue. ATP-binding residues include Tyr-50 and Lys-89. Glu-91 lines the Mg(2+) pocket. Residues 92–95 and Arg-114 each bind substrate; that span reads SHNH. The active-site Proton acceptor is His-93. Asp-115 lines the Mg(2+) pocket. Gln-238 serves as a coordination point for substrate. Mg(2+) is bound at residue Asp-266. 310–312 provides a ligand contact to substrate; it reads ESQ. Residues Asp-490 and Gly-527 each contribute to the ATP site. Asn-528 provides a ligand contact to Mg(2+). Ser-530 is a binding site for substrate.

Belongs to the FGAMS family. In terms of assembly, monomer. Part of the FGAM synthase complex composed of 1 PurL, 1 PurQ and 2 PurS subunits.

It localises to the cytoplasm. It carries out the reaction N(2)-formyl-N(1)-(5-phospho-beta-D-ribosyl)glycinamide + L-glutamine + ATP + H2O = 2-formamido-N(1)-(5-O-phospho-beta-D-ribosyl)acetamidine + L-glutamate + ADP + phosphate + H(+). The protein operates within purine metabolism; IMP biosynthesis via de novo pathway; 5-amino-1-(5-phospho-D-ribosyl)imidazole from N(2)-formyl-N(1)-(5-phospho-D-ribosyl)glycinamide: step 1/2. Its function is as follows. Part of the phosphoribosylformylglycinamidine synthase complex involved in the purines biosynthetic pathway. Catalyzes the ATP-dependent conversion of formylglycinamide ribonucleotide (FGAR) and glutamine to yield formylglycinamidine ribonucleotide (FGAM) and glutamate. The FGAM synthase complex is composed of three subunits. PurQ produces an ammonia molecule by converting glutamine to glutamate. PurL transfers the ammonia molecule to FGAR to form FGAM in an ATP-dependent manner. PurS interacts with PurQ and PurL and is thought to assist in the transfer of the ammonia molecule from PurQ to PurL. This chain is Phosphoribosylformylglycinamidine synthase subunit PurL, found in Ruegeria sp. (strain TM1040) (Silicibacter sp.).